Reading from the N-terminus, the 194-residue chain is MRIGEISRKTYETDIEVKIDLDGRGKYNIDTGIGFFNHMLCMIAKHGIMDMDVYAKGDLDVDFHHTVEDVGICIGKSIKKALGNKKSIKRYGTFFIPMDESLSMCSVDLSGRPFLVFQGELKNSKVGEMDTELIEEFFRALAFNAEMTLHIKVFYGKNTHHIIESVFKSFAHALREAVSIDEKIEGTMSTKGMI.

It belongs to the imidazoleglycerol-phosphate dehydratase family.

It is found in the cytoplasm. The enzyme catalyses D-erythro-1-(imidazol-4-yl)glycerol 3-phosphate = 3-(imidazol-4-yl)-2-oxopropyl phosphate + H2O. It functions in the pathway amino-acid biosynthesis; L-histidine biosynthesis; L-histidine from 5-phospho-alpha-D-ribose 1-diphosphate: step 6/9. This Clostridium kluyveri (strain NBRC 12016) protein is Imidazoleglycerol-phosphate dehydratase.